Here is a 575-residue protein sequence, read N- to C-terminus: MKKIKLEKPTSGSQLVLQTLKELGVEIIFGYPGGAMLPLYDAIHNFEGIQHILARHEQGATHEAEGYAKSSGKVGVVVVTSGPGATNAVTGIADAYLDSVPLLVFTGQVGPLSIGKDAFQEADTVGITAPITKYNYQIRETADIPRIVTEAYYLARTGRPGPVEIDLPKDVSTLEVTEINDPSLNLPHYHESEKATDEQLQELLTELSVSKKPVIIAGGGINYSGSVDIFRAFVEKYQIPVVSTLLGLGTLPISHELQLGMAGMHGSYAANMALVEADYIINLGSRFDDRVVSNPAKVAKNAVVAHIDIDAAELGKIVKTDIPILSDLKAALSRLLQLNKVRTDFNDWIKTVTKNKEKAPFTYEPQNHDIRPQETIKLIGEYTQGDAIIVTDVGQHQMWVAQYYPYKNARQLITSGGMGTMGFGIPAAIGAKLAQPNKNVIVFVGDGGFQMTNQELALLNGYGIAIKVVLINNHSLGMVRQWQESFYEERRSQSVFDVEPNFQLLAEAYGIKHVKLDNPKTLADDLKIITEDEPMLIEVLISKSEHVLPMIPAGLHSDEMIGLHFTDENEEVDNA.

E57 contributes to the thiamine diphosphate binding site. FAD contacts are provided by residues R159, 265–286 (HGSY…LGSR), and 308–327 (DIDA…ILSD). The segment at 395–475 (QHQMWVAQYY…IKVVLINNHS (81 aa)) is thiamine pyrophosphate binding. The Mg(2+) site is built by D446 and N473.

Belongs to the TPP enzyme family. As to quaternary structure, dimer of large and small chains. Mg(2+) serves as cofactor. Thiamine diphosphate is required as a cofactor.

The enzyme catalyses 2 pyruvate + H(+) = (2S)-2-acetolactate + CO2. The protein operates within amino-acid biosynthesis; L-isoleucine biosynthesis; L-isoleucine from 2-oxobutanoate: step 1/4. It functions in the pathway amino-acid biosynthesis; L-valine biosynthesis; L-valine from pyruvate: step 1/4. This Lactococcus lactis subsp. lactis (strain IL1403) (Streptococcus lactis) protein is Acetolactate synthase large subunit (ilvB).